The chain runs to 610 residues: T-cell immunomodulatory protein (610 aa).

Positions 1–32 are cleaved as a signal peptide; it reads MAAGLLPSARAVLALLFLGLALLSVGPAPAQA. N-linked (GlcNAc...) asparagine glycans are attached at residues asparagine 35, asparagine 94, asparagine 123, asparagine 138, asparagine 145, asparagine 150, asparagine 175, and asparagine 241. The stretch at 98-135 is one FG-GAP 1; atypical repeat; the sequence is LVTSVVPGDYDGDSQMDVLLTYFPQNHSNNELGAVIFW. Residues 153 to 183 form an FG-GAP 2; atypical repeat; sequence FHDQPLIMDFNGDLIPDVFAITNESSQPQIL. Residues 256 to 291 form an FG-GAP 3; atypical repeat; sequence VVGQSAFADFDGDGHMDHLLPGCEDKDCQKSAIYLM. Residues asparagine 351, asparagine 369, and asparagine 480 are each glycosylated (N-linked (GlcNAc...) asparagine). The chain crosses the membrane as a helical span at residues 564 to 584; the sequence is IVLLTAVALTGVCVFILAIIA.

This sequence belongs to the TIP family. As to quaternary structure, interacts with RUVBL1, RUVBL2 and alpha-tubulin.

It localises to the secreted. The protein localises to the cell membrane. In terms of biological role, modulator of T-cell function. Has a protective effect in graft versus host disease model. The polypeptide is T-cell immunomodulatory protein (Rattus norvegicus (Rat)).